The sequence spans 31 residues: Protamine-1B (31 aa).

The disordered stretch occupies residues 1 to 31 (MPRRRRASRRIRRRRRPRVSRRRRRGGRRRR).

Testis.

It localises to the nucleus. It is found in the chromosome. Protamines substitute for histones in the chromatin of sperm during the haploid phase of spermatogenesis. They compact sperm DNA into a highly condensed, stable and inactive complex. The chain is Protamine-1B from Oncorhynchus mykiss (Rainbow trout).